The sequence spans 469 residues: 3-isopropylmalate dehydratase large subunit 1 (469 aa).

3 residues coordinate [4Fe-4S] cluster: cysteine 344, cysteine 404, and cysteine 407.

This sequence belongs to the aconitase/IPM isomerase family. LeuC type 1 subfamily. Heterodimer of LeuC and LeuD. The cofactor is [4Fe-4S] cluster.

The catalysed reaction is (2R,3S)-3-isopropylmalate = (2S)-2-isopropylmalate. It participates in amino-acid biosynthesis; L-leucine biosynthesis; L-leucine from 3-methyl-2-oxobutanoate: step 2/4. In terms of biological role, catalyzes the isomerization between 2-isopropylmalate and 3-isopropylmalate, via the formation of 2-isopropylmaleate. This chain is 3-isopropylmalate dehydratase large subunit 1, found in Rubrobacter xylanophilus (strain DSM 9941 / JCM 11954 / NBRC 16129 / PRD-1).